The chain runs to 167 residues: NAD(P)H-quinone oxidoreductase subunit J (167 aa).

This sequence belongs to the complex I 30 kDa subunit family. In terms of assembly, NDH-1 can be composed of about 15 different subunits; different subcomplexes with different compositions have been identified which probably have different functions.

Its subcellular location is the cellular thylakoid membrane. The catalysed reaction is a plastoquinone + NADH + (n+1) H(+)(in) = a plastoquinol + NAD(+) + n H(+)(out). The enzyme catalyses a plastoquinone + NADPH + (n+1) H(+)(in) = a plastoquinol + NADP(+) + n H(+)(out). Functionally, NDH-1 shuttles electrons from an unknown electron donor, via FMN and iron-sulfur (Fe-S) centers, to quinones in the respiratory and/or the photosynthetic chain. The immediate electron acceptor for the enzyme in this species is believed to be plastoquinone. Couples the redox reaction to proton translocation, and thus conserves the redox energy in a proton gradient. Cyanobacterial NDH-1 also plays a role in inorganic carbon-concentration. The polypeptide is NAD(P)H-quinone oxidoreductase subunit J (Trichodesmium erythraeum (strain IMS101)).